Reading from the N-terminus, the 684-residue chain is Mitochondrial translation factor ATP22 (684 aa).

A mitochondrion-targeting transit peptide spans 1–56 (MLKCICRVYSQPLAQMVTSPLFKHMGSAGTYTILPITNLRHLSTKNCPLKIKSNRS).

Belongs to the ATP22 family.

Its subcellular location is the mitochondrion inner membrane. Its function is as follows. Translation factor specific for subunit 6 of the mitochondrial ATPase. Required for assembly of the CF(0) component of the ATPase. The sequence is that of Mitochondrial translation factor ATP22 (ATP22) from Saccharomyces cerevisiae (strain YJM789) (Baker's yeast).